The chain runs to 106 residues: Iron-sulfur cluster assembly protein CyaY (106 aa).

Belongs to the frataxin family.

Involved in iron-sulfur (Fe-S) cluster assembly. May act as a regulator of Fe-S biogenesis. In Escherichia coli O6:H1 (strain CFT073 / ATCC 700928 / UPEC), this protein is Iron-sulfur cluster assembly protein CyaY.